A 230-amino-acid chain; its full sequence is uncharacterized protein (230 aa).

A helical transmembrane segment spans residues 17 to 37 (AGALSLGIGFFALASALWFLI). N-linked (GlcNAc...) asparagine glycosylation is present at Asn126.

The protein resides in the membrane. This is an uncharacterized protein from Mus musculus (Mouse).